Here is a 582-residue protein sequence, read N- to C-terminus: Putative G-protein coupled receptor B0244.10 (582 aa).

The next 4 membrane-spanning stretches (helical) occupy residues L25–L45, I70–V90, W120–I140, and L159–T179. N190 carries N-linked (GlcNAc...) asparagine glycosylation. Residues L199–I218 form a helical membrane-spanning segment. 2 N-linked (GlcNAc...) asparagine glycosylation sites follow: N221 and N237. A run of 5 helical transmembrane segments spans residues S253 to V273, Y296 to I316, T329 to G349, I377 to L397, and W421 to V441. N457 carries N-linked (GlcNAc...) asparagine glycosylation. The next 2 membrane-spanning stretches (helical) occupy residues T475–G495 and L513–L533. The N-linked (GlcNAc...) asparagine glycan is linked to N538.

It belongs to the G-protein coupled receptor 1 family. B0244 subfamily.

It is found in the cell membrane. This Caenorhabditis elegans protein is Putative G-protein coupled receptor B0244.10.